Here is a 1466-residue protein sequence, read N- to C-terminus: Adhesion G protein-coupled receptor L1 (1466 aa).

The first 28 residues, 1 to 28, serve as a signal peptide directing secretion; that stretch reads MARLAAALWSLCVTTVLVTSATQGLSRA. The Extracellular portion of the chain corresponds to 29–852; sequence GLPFGLMRRE…EIYQGRINEL (824 aa). The SUEL-type lectin domain occupies 40 to 129; that stretch reads ACEGYPIELR…KYLEVQYDCV (90 aa). 5 disulfide bridges follow: Cys-41-Cys-71, Cys-50-Cys-128, Cys-83-Cys-115, Cys-96-Cys-102, and Cys-135-Cys-317. Glu-42 serves as a coordination point for alpha-L-rhamnose. N-linked (GlcNAc...) asparagine glycosylation occurs at Asn-98. 117–120 provides a ligand contact to alpha-L-rhamnose; that stretch reads GTYK. The region spanning 134 to 393 is the Olfactomedin-like domain; sequence VCPGTLQKVL…VVRYSLEFGP (260 aa). The tract at residues 395–463 is disordered; sequence DPSAGPATSP…APAPSTRRPP (69 aa). A compositionally biased stretch (low complexity) spans 400–436; the sequence is PATSPPLSTTTTARPTPLTSTASPAATTPLRRAPLTT. The segment covering 448–463 has biased composition (pro residues); that stretch reads DLPPATAPAPSTRRPP. 2 disulfides stabilise this stretch: Cys-475-Cys-510 and Cys-498-Cys-527. Residues Asn-526, Asn-635, Asn-736, Asn-795, Asn-800, and Asn-821 are each glycosylated (N-linked (GlcNAc...) asparagine). Residues 664 to 845 enclose the GAIN-B domain; that stretch reads PARFLAAKQN…AVLMAHREIY (182 aa). Cystine bridges form between Cys-796-Cys-827 and Cys-815-Cys-829. The GPS stretch occupies residues 796-845; the sequence is CSFWNYSERSMLGYWSTQGCRLVESNKTHTTCACSHLTNFAVLMAHREIY. A helical transmembrane segment spans residues 853–873; it reads LLSVITWVGIVISLVCLAICI. Residues 874–887 lie on the Cytoplasmic side of the membrane; that stretch reads STFCFLRGLQTDRN. Residues 888–908 form a helical membrane-spanning segment; the sequence is TIHKNLCINLFLAELLFLVGI. The Extracellular segment spans residues 909 to 914; it reads DKTQYE. The helical transmembrane segment at 915 to 935 threads the bilayer; the sequence is VACPIFAGLLHYFFLAAFSWL. Topologically, residues 936-958 are cytoplasmic; sequence CLEGVHLYLLLVEVFESEYSRTK. The chain crosses the membrane as a helical span at residues 959–979; the sequence is YYYLGGYCFPALVVGIAAAID. Residues 980-996 are Extracellular-facing; the sequence is YRSYGTEKACWLRVDNY. Residues 997–1017 traverse the membrane as a helical segment; the sequence is FIWSFIGPVSFVIVVNLVFLM. Residues 1018–1044 are Cytoplasmic-facing; that stretch reads VTLHKMIRSSSVLKPDSSRLDNIKSWA. The chain crosses the membrane as a helical span at residues 1045–1065; that stretch reads LGAIALLFLLGLTWAFGLLFI. At 1066–1069 the chain is on the extracellular side; the sequence is NKES. The helical transmembrane segment at 1070-1090 threads the bilayer; it reads VVMAYLFTTFNAFQGVFIFVF. Over 1091–1466 the chain is Cytoplasmic; sequence HCALQKKVHK…DGQMQLVTSL (376 aa). Position 1188 is an omega-N-methylarginine (Arg-1188). Ser-1214 is modified (phosphoserine). 4 disordered regions span residues 1242–1267, 1288–1319, 1352–1421, and 1443–1466; these read FNNS…RGRN, RGAS…GPGS, ESES…SRPP, and YLAA…VTSL. Residues 1296 to 1307 are compositionally biased toward pro residues; sequence GPPPEPPVPPVP. Ser-1319 is modified (phosphoserine). Residues 1400 to 1412 show a composition bias toward pro residues; the sequence is ALPPPPPAPPGPP. Phosphoserine occurs at positions 1448 and 1465.

This sequence belongs to the G-protein coupled receptor 2 family. Adhesion G-protein coupled receptor (ADGR) subfamily. Forms a heterodimer, consisting of a large extracellular region (p120) non-covalently linked to a seven-transmembrane moiety (p85). Interacts with syntaxin and with proteins of the SHANK family via the PDZ domain. Interacts (via extracellular domain) with FLRT1, FLRT2 and FLRT3 (via extracellular domain). Post-translationally, autoproteolytically cleaved into 2 subunits, an extracellular subunit and a seven-transmembrane subunit. This proteolytic processing takes place early in the biosynthetic pathway, either in the endoplasmic reticulum or in the early compartment of the Golgi apparatus.

The protein localises to the cell membrane. It localises to the cell projection. It is found in the axon. Its subcellular location is the growth cone. The protein resides in the synapse. The protein localises to the presynaptic cell membrane. It localises to the synaptosome. Its function is as follows. Calcium-independent receptor of high affinity for alpha-latrotoxin, an excitatory neurotoxin present in black widow spider venom which triggers massive exocytosis from neurons and neuroendocrine cells. Receptor for TENM2 that mediates heterophilic synaptic cell-cell contact and postsynaptic specialization. Receptor probably implicated in the regulation of exocytosis. This chain is Adhesion G protein-coupled receptor L1, found in Mus musculus (Mouse).